The following is a 399-amino-acid chain: Glycerate 2-kinase (399 aa).

Residue K48 participates in substrate binding.

This sequence belongs to the glycerate kinase type-1 family. Homodimer. The cofactor is Mg(2+). It depends on Ni(2+) as a cofactor. Requires Mn(2+) as cofactor. Co(2+) serves as cofactor. Ca(2+) is required as a cofactor. The cofactor is Zn(2+). It depends on Sr(2+) as a cofactor.

It carries out the reaction (R)-glycerate + ATP = (2R)-2-phosphoglycerate + ADP + H(+). Its function is as follows. Catalyzes the ATP-dependent phosphorylation of D-glycerate to 2-phosphoglycerate. It can also utilize GTP, CTP, UTP, ADP, AMP or pyrophosphate as phosphate donor. The sequence is that of Glycerate 2-kinase (gck) from Sulfurisphaera tokodaii (strain DSM 16993 / JCM 10545 / NBRC 100140 / 7) (Sulfolobus tokodaii).